A 199-amino-acid polypeptide reads, in one-letter code: Fe/S biogenesis protein NfuA (199 aa).

Positions 151 and 154 each coordinate [4Fe-4S] cluster.

This sequence belongs to the NfuA family. Homodimer. The cofactor is [4Fe-4S] cluster.

Its function is as follows. Involved in iron-sulfur cluster biogenesis. Binds a 4Fe-4S cluster, can transfer this cluster to apoproteins, and thereby intervenes in the maturation of Fe/S proteins. Could also act as a scaffold/chaperone for damaged Fe/S proteins. This is Fe/S biogenesis protein NfuA from Xylella fastidiosa (strain 9a5c).